A 306-amino-acid polypeptide reads, in one-letter code: Curved DNA-binding protein (306 aa).

In terms of domain architecture, J spans Asp-5–Trp-69.

It localises to the cytoplasm. The protein resides in the nucleoid. DNA-binding protein that preferentially recognizes a curved DNA sequence. It is probably a functional analog of DnaJ; displays overlapping activities with DnaJ, but functions under different conditions, probably acting as a molecular chaperone in an adaptive response to environmental stresses other than heat shock. Lacks autonomous chaperone activity; binds native substrates and targets them for recognition by DnaK. Its activity is inhibited by the binding of CbpM. This is Curved DNA-binding protein from Shigella sonnei (strain Ss046).